A 448-amino-acid polypeptide reads, in one-letter code: MDYYQSELIKLFQKSNEIYKDNNFETKLNEKNYKFLLVYLNSIHSILKIDMKLNIYQYINIEFKELILISKELMKIVFDIIHSGTWNNIDILFKDLFAYSSILYIYSFFLIQFKNIKVDNNNNNNININIPNPIKKIILKKLDLALIFGDKLFNQVINQIINLISNNNNNNNNNFLNNFKNENYNNNNENEIILNKEKLIKRISRPPSLNEFKNEYMIKGNPCVIENLMKEWPCFNERNWSDLNYLKNVAGSRLVPIEIGPNYLHEKMKQKLINFNKFIDEYIISKNSDDDNDDIGYLAQTKLFEQIPQLRNDILIPEYCKIKIGCGDDDNDNNKEDNVEINAWLGPKGTVTPLHYDPKHNFLCQIVGRKYIKLFSPKESNNLYPHLNSKLFFNTSMVDVENPDHSKFPLFKNCDYIELILNAGEILYIPPTYWHFVKSLSQSFSIFP.

The region spanning 305–448 is the JmjC domain; it reads EQIPQLRNDI…SLSQSFSIFP (144 aa).

The protein is JmjC domain-containing protein D (jcdD) of Dictyostelium discoideum (Social amoeba).